A 153-amino-acid chain; its full sequence is Lysine-acyltransferase RtxC (153 aa).

His32 is a catalytic residue.

Belongs to the RTX toxin acyltransferase family.

It localises to the cytoplasm. It catalyses the reaction a fatty acyl-[ACP] + L-lysyl-[protein] = N(6)-(fatty acyl)-L-lysyl-[protein] + holo-[ACP] + H(+). Functionally, catalyzes fatty acylation of the protoxin (RtxA) at internal lysine residues, thereby converting it to the active toxin. In Vibrio cholerae serotype O1 (strain ATCC 39315 / El Tor Inaba N16961), this protein is Lysine-acyltransferase RtxC (rtxC).